Reading from the N-terminus, the 345-residue chain is MTILNPITFPVILESLLASNDLTEEQSKFLMNSWLENKIEPVQTGAFLAALRAKGVSGDELSAMAKILQDASTTPSDLPSFDLVDTCGTGGDGANTFNISTGVAFVSAALGVKIAKHGNRSASGKVGSADVLENLGLPLNVSSGKVVEALKKLGITFLFAPSWHPSLVNLAPLRKSLGVRTIFNLLGPLVNPLRPKSQVLGVAKADLLDPMSVALKGMGLKRAVVVHGAGGLDEASLAGANQFRFLDKDVIRSEIIKPGDLGLTQISNESLKGDDLKTNSHILKSLLNGEGNQYHKEVVALNTALVLWVSGTEDDLSSGVKRALDCLNTDKSWLLFEQLRDFLAT.

5-phospho-alpha-D-ribose 1-diphosphate-binding positions include Gly-88, 91 to 92 (GD), Thr-96, 98 to 101 (NIST), 116 to 124 (KHGNRSASG), and Ser-128. Gly-88 is a binding site for anthranilate. A Mg(2+)-binding site is contributed by Ser-100. Asn-119 serves as a coordination point for anthranilate. Arg-174 lines the anthranilate pocket. Residues Asp-233 and Glu-234 each contribute to the Mg(2+) site.

It belongs to the anthranilate phosphoribosyltransferase family. In terms of assembly, homodimer. Mg(2+) is required as a cofactor.

It carries out the reaction N-(5-phospho-beta-D-ribosyl)anthranilate + diphosphate = 5-phospho-alpha-D-ribose 1-diphosphate + anthranilate. It functions in the pathway amino-acid biosynthesis; L-tryptophan biosynthesis; L-tryptophan from chorismate: step 2/5. In terms of biological role, catalyzes the transfer of the phosphoribosyl group of 5-phosphorylribose-1-pyrophosphate (PRPP) to anthranilate to yield N-(5'-phosphoribosyl)-anthranilate (PRA). This Prochlorococcus marinus (strain NATL1A) protein is Anthranilate phosphoribosyltransferase.